A 277-amino-acid polypeptide reads, in one-letter code: Ras suppressor protein 1 (277 aa).

The disordered stretch occupies residues 1 to 24 (MSKSLKKLVEESREKNQPEVDMSD). Serine 2 carries the N-acetylserine modification. Residues 7–24 (KLVEESREKNQPEVDMSD) show a composition bias toward basic and acidic residues. LRR repeat units follow at residues 41–63 (HITQ…AELK), 64–85 (NLEV…ISSL), 87–109 (KLKH…GSLP), 110–133 (ALEV…FFYL), 135–156 (TLRA…IGKL), 158–179 (KLQI…IGEL), and 181–202 (QLKE…LGNL). Residues 250-277 (MQANPEPPKKNNDKSKKISRKPLAAKNR) are disordered. Over residues 256 to 265 (PPKKNNDKSK) the composition is skewed to basic and acidic residues.

Its function is as follows. Potentially plays a role in the Ras signal transduction pathway. Capable of suppressing v-Ras transformation in vitro. The polypeptide is Ras suppressor protein 1 (RSU1) (Homo sapiens (Human)).